Consider the following 149-residue polypeptide: D-aminoacyl-tRNA deacylase (149 aa).

The short motif at 137 to 138 is the Gly-cisPro motif, important for rejection of L-amino acids element; the sequence is GP.

This sequence belongs to the DTD family. Homodimer.

It localises to the cytoplasm. It catalyses the reaction glycyl-tRNA(Ala) + H2O = tRNA(Ala) + glycine + H(+). The catalysed reaction is a D-aminoacyl-tRNA + H2O = a tRNA + a D-alpha-amino acid + H(+). In terms of biological role, an aminoacyl-tRNA editing enzyme that deacylates mischarged D-aminoacyl-tRNAs. Also deacylates mischarged glycyl-tRNA(Ala), protecting cells against glycine mischarging by AlaRS. Acts via tRNA-based rather than protein-based catalysis; rejects L-amino acids rather than detecting D-amino acids in the active site. By recycling D-aminoacyl-tRNA to D-amino acids and free tRNA molecules, this enzyme counteracts the toxicity associated with the formation of D-aminoacyl-tRNA entities in vivo and helps enforce protein L-homochirality. This is D-aminoacyl-tRNA deacylase from Clostridium perfringens (strain ATCC 13124 / DSM 756 / JCM 1290 / NCIMB 6125 / NCTC 8237 / Type A).